The chain runs to 123 residues: Holo-[acyl-carrier-protein] synthase (123 aa).

Mg(2+) is bound by residues D7 and E56.

Belongs to the P-Pant transferase superfamily. AcpS family. The cofactor is Mg(2+).

Its subcellular location is the cytoplasm. It carries out the reaction apo-[ACP] + CoA = holo-[ACP] + adenosine 3',5'-bisphosphate + H(+). Functionally, transfers the 4'-phosphopantetheine moiety from coenzyme A to a Ser of acyl-carrier-protein. The chain is Holo-[acyl-carrier-protein] synthase from Carboxydothermus hydrogenoformans (strain ATCC BAA-161 / DSM 6008 / Z-2901).